Here is a 266-residue protein sequence, read N- to C-terminus: Stomatin homolog PH1511 (266 aa).

A helical transmembrane segment spans residues 7–27; sequence FFVTSIILLFILIFLASAIKI. Coiled coils occupy residues 125-152 and 178-213; these read GQAH…EATD and RQAE…ISEH.

The protein belongs to the band 7/mec-2 family. As to quaternary structure, homotrimer. Interacts with PH1510 and is cleaved by PH1510.

The protein resides in the membrane. The chain is Stomatin homolog PH1511 from Pyrococcus horikoshii (strain ATCC 700860 / DSM 12428 / JCM 9974 / NBRC 100139 / OT-3).